The chain runs to 65 residues: Conotoxin Cal16.1 (65 aa).

An N-terminal signal peptide occupies residues 1–19; it reads MRCLSIFVLLVLLVSFAVA. The propeptide occupies 20 to 48; sequence ELDVEGEIVKQLLTRGTLKDADFWKRLEM. Position 49 is a pyrrolidone carboxylic acid (Gln-49). Intrachain disulfides connect Cys-51-Cys-60 and Cys-53-Cys-61. Glutamic acid 1-amide is present on Glu-63.

Expressed by the venom duct.

The protein localises to the secreted. In terms of biological role, probable neurotoxin with unknown target. Possibly targets ion channels. The sequence is that of Conotoxin Cal16.1 from Californiconus californicus (California cone).